Reading from the N-terminus, the 247-residue chain is ATP synthase subunit a, chloroplastic (247 aa).

Helical transmembrane passes span 28–48 (GQVL…CLLG), 95–115 (VPFL…GALI), 134–154 (INTT…AGIS), 199–219 (LVVG…IMLL), and 220–240 (GLFT…AYIG).

It belongs to the ATPase A chain family. In terms of assembly, F-type ATPases have 2 components, CF(1) - the catalytic core - and CF(0) - the membrane proton channel. CF(1) has five subunits: alpha(3), beta(3), gamma(1), delta(1), epsilon(1). CF(0) has four main subunits: a, b, b' and c.

Its subcellular location is the plastid. The protein localises to the chloroplast thylakoid membrane. Functionally, key component of the proton channel; it plays a direct role in the translocation of protons across the membrane. This Chlorella vulgaris (Green alga) protein is ATP synthase subunit a, chloroplastic.